The following is a 165-amino-acid chain: Anaerobic nitrite reductase GLB1 (165 aa).

One can recognise a Globin domain in the interval 12–162 (VFGEEQEALV…LVAAIKREMK (151 aa)). The Homodimerization signature appears at 45–49 (EIAPS). The heme b site is built by serine 55, lysine 69, histidine 73, arginine 103, threonine 107, and histidine 108. The short motif at 115 to 127 (DGHFEVTGFALLE) is the Homodimerization element.

The protein belongs to the plant globin family. As to quaternary structure, homodimer. Heme b is required as a cofactor. As to expression, in vegetative but not in embryonic organs.

It is found in the cytoplasm. The protein resides in the nucleus. The catalysed reaction is Fe(III)-heme b-[protein] + nitric oxide + H2O = Fe(II)-heme b-[protein] + nitrite + 2 H(+). Its function is as follows. Phytoglobin that reduces nitrite to nitric oxide (NO) under anoxic conditions (e.g. during flooding or in waterlogged soil). May not function as an oxygen storage or transport protein. Has an unusually high affinity for O(2) through an hexacoordinate heme iron because of a very low dissociation constant. The protein is Anaerobic nitrite reductase GLB1 (HB) of Zea mays subsp. parviglumis (Balsas teosinte).